The sequence spans 495 residues: Cobyric acid synthase (495 aa).

A GATase cobBQ-type domain is found at 262 to 445 (CLEIAVIRLP…LHGLFDNHRW (184 aa)). Cys340 serves as the catalytic Nucleophile. His437 is an active-site residue.

It belongs to the CobB/CobQ family. CobQ subfamily.

The protein operates within cofactor biosynthesis; adenosylcobalamin biosynthesis. Functionally, catalyzes amidations at positions B, D, E, and G on adenosylcobyrinic A,C-diamide. NH(2) groups are provided by glutamine, and one molecule of ATP is hydrogenolyzed for each amidation. The chain is Cobyric acid synthase from Synechococcus sp. (strain JA-3-3Ab) (Cyanobacteria bacterium Yellowstone A-Prime).